We begin with the raw amino-acid sequence, 435 residues long: Polyadenylate-binding protein RBP47B (435 aa).

The span at 1 to 15 (MQTTNGSDSTLATSG) shows a compositional bias: polar residues. 2 disordered regions span residues 1–41 (MQTT…QQWM) and 85–104 (YGSYQQHQHQQHKAIDRGSG). The span at 29 to 41 (QWQQQQQQQQQWM) shows a compositional bias: low complexity. 3 consecutive RRM domains span residues 108–188 (KTLW…WASF), 202–281 (LSVF…IATP), and 321–393 (ATIF…WGRS). The disordered stretch occupies residues 392-412 (RSPNKQWRGDSGQQWNGGYSR).

This sequence belongs to the polyadenylate-binding RBP47 family. As to quaternary structure, interacts with the poly(A) tail of mRNA in nucleus. As to expression, expressed at low levels in leaves, stems, flowers, and seedlings.

Its subcellular location is the nucleus. It is found in the cytoplasmic granule. Functionally, heterogeneous nuclear ribonucleoprotein (hnRNP)-protein binding the poly(A) tail of mRNA and probably involved in some steps of pre-mRNA maturation. This Arabidopsis thaliana (Mouse-ear cress) protein is Polyadenylate-binding protein RBP47B (RBP47B).